Consider the following 484-residue polypeptide: PTS system N-acetylmuramic acid-specific EIIBC component (484 aa).

The PTS EIIB type-1 domain occupies 1-89 (MAKITTSMIQ…NEMMEGEEDN (89 aa)). The active-site Phosphocysteine intermediate; for EIIB activity is the Cys-28. A disordered region spans residues 83 to 106 (MEGEEDNSASTTAESRDLKDVASE). Over residues 96 to 106 (ESRDLKDVASE) the composition is skewed to basic and acidic residues. Residues 124 to 484 (SKFATIFTPL…FFGTKNVDLS (361 aa)) enclose the PTS EIIC type-1 domain. Transmembrane regions (helical) follow at residues 126 to 146 (FATIFTPLIPGFIAAGLLLGF), 168 to 188 (LILYMKVFSKGLFSFLSILIG), 194 to 214 (AFGGSGVNGAILASLFVLGYN), 232 to 252 (GIDPRGNIIGVLIAAIIGAGV), 273 to 293 (TLLIMGAVTFVVIMPIGGVLF), 312 to 332 (ILAGLFLISVMFGIHQGFVPV), 345 to 365 (LFPILAMAGAGQVGAALALYA), 379 to 399 (GSIIPGFLGIGEPLIYGVTLP), 404 to 424 (FITACVGGAAGGFFIGLVSYM), and 451 to 471 (IFAGMLVFAAGLVISYVAGFL).

It localises to the cell inner membrane. The catalysed reaction is N-acetyl-beta-D-muramate(out) + N(pros)-phospho-L-histidyl-[protein] = N-acetyl-beta-D-muramate 6-phosphate(in) + L-histidyl-[protein]. The phosphoenolpyruvate-dependent sugar phosphotransferase system (sugar PTS), a major carbohydrate active transport system, catalyzes the phosphorylation of incoming sugar substrates concomitantly with their translocation across the cell membrane. This system is involved in N-acetylmuramic acid (MurNAc) transport, yielding cytoplasmic MurNAc-6-P. Is also able to take up anhydro-N-acetylmuramic acid (anhMurNAc), but cannot phosphorylate the carbon 6, probably because of the 1,6-anhydro ring. The sequence is that of PTS system N-acetylmuramic acid-specific EIIBC component (murP) from Aliivibrio fischeri (strain ATCC 700601 / ES114) (Vibrio fischeri).